The sequence spans 1099 residues: Ras-associating and dilute domain-containing protein (1099 aa).

The region spanning 90–193 is the Ras-associating domain; sequence APGVLKVFGD…RRFELRKKSD (104 aa). Residues 221–265 form a disordered region; it reads AKGTPALTSEAAQSSPPTRLRRTVSETSLSPAPSLPEAAQRPEEP. The segment covering 226–237 has biased composition (polar residues); the sequence is ALTSEAAQSSPP. 4 positions are modified to phosphoserine: serine 235, serine 245, serine 248, and serine 250. The FHA domain maps to 302 to 377; that stretch reads HTVGQRTPSS…LQHGDLLSLG (76 aa). Serine 422 and serine 432 each carry phosphoserine. The 268-residue stretch at 525–792 folds into the Dilute domain; the sequence is ADLVPDLQHI…PDGPEAFQSE (268 aa). The interval 868–941 is disordered; the sequence is GHGCPLANRD…STPLGLEPAG (74 aa). A Phosphoserine modification is found at serine 915. A compositionally biased stretch (polar residues) spans 916 to 927; it reads QAGSLHTDSSCM. A PDZ domain is found at 1000–1085; the sequence is MVELERGPSG…KMRFLVAKSD (86 aa).

It belongs to the RADIL family. Interacts with RAP1A; in a GTP-dependent manner. Does not interact with members of the Ras family. Interacts (via PDZ domain) with KIF14; is recruited to the microtubule network restricting its interaction with activated RAP1A.

Its function is as follows. Downstream effector of Rap required for cell adhesion and migration of neural crest precursors during development. The polypeptide is Ras-associating and dilute domain-containing protein (Radil) (Mus musculus (Mouse)).